Here is a 729-residue protein sequence, read N- to C-terminus: Cellulose synthase-like protein E1 (729 aa).

2 helical membrane-spanning segments follow: residues 29-49 and 64-84; these read VIAY…IWFY and LIWF…VVTQ. Catalysis depends on residues aspartate 152 and aspartate 443. A run of 5 helical transmembrane segments spans residues 526–546, 553–573, 644–664, 680–700, and 709–729; these read LPVL…IPLF, WFIP…AEFL, MFLV…AAVA, QFVI…GMLL, and MSVT…LAFL.

It belongs to the glycosyltransferase 2 family. Plant cellulose synthase-like E subfamily.

The protein resides in the golgi apparatus membrane. Functionally, thought to be a Golgi-localized beta-glycan synthase that polymerize the backbones of noncellulosic polysaccharides (hemicelluloses) of plant cell wall. This chain is Cellulose synthase-like protein E1 (CSLE1), found in Arabidopsis thaliana (Mouse-ear cress).